We begin with the raw amino-acid sequence, 500 residues long: Replication factor C large subunit (500 aa).

44–51 (GSPGVGKT) contributes to the ATP binding site. Positions 443-500 (HAADDLGASDGETTNASGTASSSGDDGDADGTTDGDGSDANDGNDDDDDGQAGLSDFV) are disordered. The span at 455 to 466 (TTNASGTASSSG) shows a compositional bias: low complexity. The span at 467 to 492 (DDGDADGTTDGDGSDANDGNDDDDDG) shows a compositional bias: acidic residues.

It belongs to the activator 1 small subunits family. RfcL subfamily. In terms of assembly, heteromultimer composed of small subunits (RfcS) and large subunits (RfcL).

Its function is as follows. Part of the RFC clamp loader complex which loads the PCNA sliding clamp onto DNA. This Halorubrum lacusprofundi (strain ATCC 49239 / DSM 5036 / JCM 8891 / ACAM 34) protein is Replication factor C large subunit.